Reading from the N-terminus, the 204-residue chain is E3 ubiquitin-protein ligase MPSR1 (204 aa).

The segment at cysteine 113–arginine 154 adopts an RING-type; atypical zinc-finger fold.

Post-translationally, autoubiquitinated.

It is found in the cytoplasm. It catalyses the reaction S-ubiquitinyl-[E2 ubiquitin-conjugating enzyme]-L-cysteine + [acceptor protein]-L-lysine = [E2 ubiquitin-conjugating enzyme]-L-cysteine + N(6)-ubiquitinyl-[acceptor protein]-L-lysine.. Its function is as follows. E3 ubiquitin-protein ligase involved in protein quality control (PQC) under proteotoxic stress. Is essential to plant survival under proteotoxic stress. Functions by removing damaged proteins before they form cytotoxic aggregates. Recognizes misfolded proteins selectively and tethers polyubiquitin chains to the proteins directly for subsequent degradation by the 26S proteasome pathway. Targets misfolded proteins independently of cytoplasmic chaperones. Associates with the 26S proteasome and sustains the structural integrity of the proteasome complex at the initial stage of proteotoxic stress. Under normal conditions, MPSR1 becomes highly unstable by its autoubiquitination activity and is stabilized during proteotoxic stress by conjugating ubiquitins on misfolded proteins. The polypeptide is E3 ubiquitin-protein ligase MPSR1 (Arabidopsis thaliana (Mouse-ear cress)).